Consider the following 117-residue polypeptide: DNA-binding protein DDB_G0278111 (117 aa).

Residues Met1–Gly40 form a disordered region. The segment covering Gln8 to Glu22 has biased composition (low complexity). Over residues Ala23–Gln39 the composition is skewed to basic and acidic residues.

It belongs to the PDCD5 family.

This is DNA-binding protein DDB_G0278111 from Dictyostelium discoideum (Social amoeba).